An 878-amino-acid polypeptide reads, in one-letter code: von Willebrand factor A domain-containing protein DDB_G0267758 (878 aa).

Residues 36–169 (GLFLTENNKK…TVKITLTITS (134 aa)) enclose the VIT domain. The VWFA domain maps to 316 to 496 (EFIFLIDCSG…ISLKPMFSNI (181 aa)). Over residues 595-623 (SSSSSSSSSSSSSSSSSSSSSSSSSSSSS) the composition is skewed to low complexity. Disordered stretches follow at residues 595–638 (SSSS…HRLS) and 752–774 (SVKKSKKSETKEETTKTTSSKTK). The span at 624–635 (TTTATTNQNQIH) shows a compositional bias: polar residues.

This chain is von Willebrand factor A domain-containing protein DDB_G0267758, found in Dictyostelium discoideum (Social amoeba).